Consider the following 814-residue polypeptide: Leucine--tRNA ligase (814 aa).

The 'HIGH' region motif lies at 42 to 52 (PYPSGNLHIGH). Positions 582 to 586 (KMSKS) match the 'KMSKS' region motif. Lys585 provides a ligand contact to ATP.

The protein belongs to the class-I aminoacyl-tRNA synthetase family.

The protein resides in the cytoplasm. It carries out the reaction tRNA(Leu) + L-leucine + ATP = L-leucyl-tRNA(Leu) + AMP + diphosphate. The sequence is that of Leucine--tRNA ligase from Herpetosiphon aurantiacus (strain ATCC 23779 / DSM 785 / 114-95).